A 60-amino-acid polypeptide reads, in one-letter code: FIIKVPLVKKKSLRKNLKEHGLLKDFLKKHSPNPASKYFPQEAAVMATQPLENYMDMEYF.

A propeptide spans 1–45 (FIIKVPLVKKKSLRKNLKEHGLLKDFLKKHSPNPASKYFPQEAAV) (activation peptide).

The protein belongs to the peptidase A1 family.

The protein resides in the secreted. It catalyses the reaction Preferential cleavage: hydrophobic, preferably aromatic, residues in P1 and P1' positions. Cleaves 1-Phe-|-Val-2, 4-Gln-|-His-5, 13-Glu-|-Ala-14, 14-Ala-|-Leu-15, 15-Leu-|-Tyr-16, 16-Tyr-|-Leu-17, 23-Gly-|-Phe-24, 24-Phe-|-Phe-25 and 25-Phe-|-Tyr-26 bonds in the B chain of insulin.. Its function is as follows. Shows particularly broad specificity; although bonds involving phenylalanine and leucine are preferred, many others are also cleaved to some extent. The sequence is that of Pepsin A (PGA) from Ursus thibetanus (Asiatic black bear).